We begin with the raw amino-acid sequence, 460 residues long: tRNA modification GTPase MnmE (460 aa).

Arg-25, Glu-87, and Arg-126 together coordinate (6S)-5-formyl-5,6,7,8-tetrahydrofolate. In terms of domain architecture, TrmE-type G spans 221-381; the sequence is GLKVAIVGRP…LETAIANLVQ (161 aa). Residue Asn-231 participates in K(+) binding. GTP-binding positions include 231 to 236, 250 to 256, and 275 to 278; these read NVGKSS, TDLPGTT, and DTAG. Ser-235 is a binding site for Mg(2+). K(+) contacts are provided by Thr-250, Leu-252, and Thr-255. Thr-256 is a Mg(2+) binding site. A (6S)-5-formyl-5,6,7,8-tetrahydrofolate-binding site is contributed by Lys-460.

Belongs to the TRAFAC class TrmE-Era-EngA-EngB-Septin-like GTPase superfamily. TrmE GTPase family. In terms of assembly, homodimer. Heterotetramer of two MnmE and two MnmG subunits. The cofactor is K(+).

The protein resides in the cytoplasm. Functionally, exhibits a very high intrinsic GTPase hydrolysis rate. Involved in the addition of a carboxymethylaminomethyl (cmnm) group at the wobble position (U34) of certain tRNAs, forming tRNA-cmnm(5)s(2)U34. In Picosynechococcus sp. (strain ATCC 27264 / PCC 7002 / PR-6) (Agmenellum quadruplicatum), this protein is tRNA modification GTPase MnmE.